Consider the following 414-residue polypeptide: CinA-like protein (414 aa).

This sequence belongs to the CinA family.

This chain is CinA-like protein, found in Koribacter versatilis (strain Ellin345).